The following is a 563-amino-acid chain: Sulfite reductase [NADPH] hemoprotein beta-component (563 aa).

[4Fe-4S] cluster is bound by residues Cys426, Cys432, Cys472, and Cys476. Cys476 is a binding site for siroheme.

This sequence belongs to the nitrite and sulfite reductase 4Fe-4S domain family. In terms of assembly, alpha(8)-beta(8). The alpha component is a flavoprotein, the beta component is a hemoprotein. It depends on siroheme as a cofactor. [4Fe-4S] cluster is required as a cofactor.

It carries out the reaction hydrogen sulfide + 3 NADP(+) + 3 H2O = sulfite + 3 NADPH + 4 H(+). It participates in sulfur metabolism; hydrogen sulfide biosynthesis; hydrogen sulfide from sulfite (NADPH route): step 1/1. Functionally, component of the sulfite reductase complex that catalyzes the 6-electron reduction of sulfite to sulfide. This is one of several activities required for the biosynthesis of L-cysteine from sulfate. The sequence is that of Sulfite reductase [NADPH] hemoprotein beta-component from Photobacterium profundum (strain SS9).